The sequence spans 440 residues: Stromal membrane-associated protein 1 (440 aa).

An Arf-GAP domain is found at 18-143; the sequence is QLILSKLLRE…IAITNKEKEK (126 aa). A C4-type zinc finger spans residues 33–56; the sequence is CADCEAKGPRWASWNIGVFICIRC. Basic and acidic residues-rich tracts occupy residues 140–158 and 165–178; these read EKEK…EKPA and KLPK…EPKK. Disordered regions lie at residues 140 to 211 and 410 to 440; these read EKEK…PATA and NASA…QLWK. An Interaction with clathrin heavy chains motif is present at residues 192-196; sequence LLGLD. The segment covering 420–440 has biased composition (low complexity); that stretch reads STTAGWSGSSSGQTLSTQLWK.

Interacts with ARF6. Interacts with clathrin heavy chains via the clathrin box-like motif. Detected in adult brain, lung, heart, liver, ovary and bone marrow. Detected in stromal cells of the red pulp of adult spleen.

It is found in the cell membrane. Its function is as follows. GTPase activating protein that acts on ARF6. Plays a role in clathrin-dependent endocytosis. May play a role in erythropoiesis. The polypeptide is Stromal membrane-associated protein 1 (Smap1) (Mus musculus (Mouse)).